The sequence spans 205 residues: High frequency lysogenization protein HflD homolog (205 aa).

It belongs to the HflD family.

Its subcellular location is the cytoplasm. The protein resides in the cell inner membrane. The chain is High frequency lysogenization protein HflD homolog from Shewanella piezotolerans (strain WP3 / JCM 13877).